Consider the following 483-residue polypeptide: Protein P55 (483 aa).

The helical transmembrane segment at 342–359 (LTPVMALIIILVYYSIYG) threads the bilayer.

The protein localises to the host membrane. The sequence is that of Protein P55 from Vitis vinifera (Grape).